The sequence spans 316 residues: Remorin 4.1 (316 aa).

3 disordered regions span residues 1–108 (MLSE…PSEL), 125–202 (NANA…SVGQ), and 267–287 (AQNE…SAEA). Positions 40-53 (EREEEVVVEEELEE) are enriched in acidic residues. Positions 92–104 (RHTSIRSVGSDTA) are enriched in polar residues. The segment covering 125–135 (NANAAAAAAAN) has biased composition (low complexity). 2 stretches are compositionally biased toward basic and acidic residues: residues 143–153 (GVDDALGRIGE) and 277–287 (KAEEKRASAEA). Residues 242–288 (VEKANAWLKKYERKLEEKRAKAMEKAQNEVAKARRKAEEKRASAEAK) are a coiled coil.

It belongs to the remorin family. Interacts with BAK1. In terms of processing, phosphorylated by BRI1. Phosphorylation reduces the binding affinity to BAK1. Expressed in roots, leaf blades and leaf sheaths. Expressed at low levels in stems and spikelets.

It is found in the cell membrane. Its function is as follows. Functions in abscisic acid (ABA) signaling downstream of BZIP23. Acts as antagonistic and negative regulator of brassinosteroid (BR) signaling. Binds to BAK1 and inhibits its interaction with the BR receptor BRI1. Inhibits the formation and subsequent activation of the BRI1-BAK1 receptor complex. The polypeptide is Remorin 4.1 (Oryza sativa subsp. japonica (Rice)).